Reading from the N-terminus, the 246-residue chain is MSGHSKWHNIQAKKGKADAKRGKVFTKIGKEIAVAVKTGGANLDANSKLRDCVAKAKAANMPMDTINRAIKKGAGELEGVNYEEIIYEGYGPAGVAMLVNVLTDNKNRSASDVRYCFDRNGGNLGASGCVAWMFQRKGQIVIEKNDSIDEDELMMKVLDFGAEDFASEEEVFIITTAQEEFSNVREALEKENFEFVSAELTMVPDNTVKLSLEDSERVQKLIDKLEDSDDVQDVYHNAEFDEAFEG.

It belongs to the TACO1 family.

It localises to the cytoplasm. This is Probable transcriptional regulatory protein CA_C2295 from Clostridium acetobutylicum (strain ATCC 824 / DSM 792 / JCM 1419 / IAM 19013 / LMG 5710 / NBRC 13948 / NRRL B-527 / VKM B-1787 / 2291 / W).